A 102-amino-acid polypeptide reads, in one-letter code: Urease subunit beta (102 aa).

Belongs to the urease beta subunit family. In terms of assembly, heterotrimer of UreA (gamma), UreB (beta) and UreC (alpha) subunits. Three heterotrimers associate to form the active enzyme.

It localises to the cytoplasm. It carries out the reaction urea + 2 H2O + H(+) = hydrogencarbonate + 2 NH4(+). It functions in the pathway nitrogen metabolism; urea degradation; CO(2) and NH(3) from urea (urease route): step 1/1. The protein is Urease subunit beta of Acinetobacter baumannii (strain ACICU).